Consider the following 353-residue polypeptide: Protein RecA (353 aa).

Position 67–74 (67–74) interacts with ATP; it reads GPESSGKT.

Belongs to the RecA family.

Its subcellular location is the cytoplasm. Its function is as follows. Can catalyze the hydrolysis of ATP in the presence of single-stranded DNA, the ATP-dependent uptake of single-stranded DNA by duplex DNA, and the ATP-dependent hybridization of homologous single-stranded DNAs. It interacts with LexA causing its activation and leading to its autocatalytic cleavage. The polypeptide is Protein RecA (Shewanella loihica (strain ATCC BAA-1088 / PV-4)).